Consider the following 279-residue polypeptide: MNRYDNSLSGLKLGQKTEYNAKYDRTLLQPVPRRLNRDDLGISAQQPFNQGADIWTAYEISWLNPKGLPQIAIADAEIDFRSENLVESKSFKLYLNSFNQTKFASPAEVQDTIRRDLQDCVQGEVKVRLNSVAFYTHQPIHELSGEIIDNQDIEISDYGFNAELLTNCTCDVQVEETLVSHLLKSNCLITGQPDWGTLQIRYAGNRIDREKLLRYIVSFRQHNEFHEQCVERIFCDILHYAEPEKLTVYARYTRRGGLDINPFRSNFEPVPGNFRLARQ.

86–88 (VES) lines the substrate pocket. 88 to 89 (SK) contributes to the NADPH binding site. Cys187 acts as the Thioimide intermediate in catalysis. Asp194 acts as the Proton donor in catalysis. A substrate-binding site is contributed by 226-227 (HE). 255-256 (RG) lines the NADPH pocket.

Belongs to the GTP cyclohydrolase I family. QueF type 2 subfamily. Homodimer.

The protein resides in the cytoplasm. It carries out the reaction 7-aminomethyl-7-carbaguanine + 2 NADP(+) = 7-cyano-7-deazaguanine + 2 NADPH + 3 H(+). Its pathway is tRNA modification; tRNA-queuosine biosynthesis. Its function is as follows. Catalyzes the NADPH-dependent reduction of 7-cyano-7-deazaguanine (preQ0) to 7-aminomethyl-7-deazaguanine (preQ1). This chain is NADPH-dependent 7-cyano-7-deazaguanine reductase, found in Actinobacillus succinogenes (strain ATCC 55618 / DSM 22257 / CCUG 43843 / 130Z).